The primary structure comprises 263 residues: MLFAFGLTLFAGLATGIGGLIAVARKTVTEGFLAGSLGFSVGVMLYVSFVEILPGAFDELTSVWGEKGGSWAAVIGFFGGIALIAIIDRLVPTAINPHEPSTVGGAVEGFERRNRMMKMGVLTALAIAIHNFPEGFATFLAGLSDPMIAIPVAVAIAIHNIPEGIAVAVPLREATGSRRKALGWATLSGLAEPAGALIGFLLLMPFIGPEALGLCFAAVAGVMVFISVDELLPTAISSGKHHTAIYGLIAGMAVMAISLLLFI.

5 helical membrane passes run 1–21, 37–57, 68–88, 116–136, and 138–158; these read MLFA…GGLI, LGFS…PGAF, GGSW…AIID, MMKM…PEGF, and TFLA…AIAI. 2 residues coordinate Fe(2+): asparagine 131 and glutamate 134. Residue glutamate 134 coordinates Zn(2+). Histidine 159 lines the Zn(2+) pocket. Fe(2+) contacts are provided by asparagine 160, glutamate 163, and glutamate 192. Position 163 (glutamate 163) interacts with Zn(2+). 3 consecutive transmembrane segments (helical) span residues 184–204, 206–226, and 243–263; these read WATL…LLLM, FIGP…MVFI, and TAIY…LLFI.

It belongs to the ZIP transporter (TC 2.A.5) family. ZupT subfamily.

It localises to the cell membrane. It catalyses the reaction Zn(2+)(in) = Zn(2+)(out). Its function is as follows. Mediates zinc uptake. May also transport other divalent cations. This chain is Zinc transporter ZupT, found in Corynebacterium glutamicum (strain ATCC 13032 / DSM 20300 / JCM 1318 / BCRC 11384 / CCUG 27702 / LMG 3730 / NBRC 12168 / NCIMB 10025 / NRRL B-2784 / 534).